The sequence spans 262 residues: Catechol O-methyltransferase domain-containing protein 1 (262 aa).

A helical; Signal-anchor for type II membrane protein transmembrane segment spans residues 12-32 (AALALGSAALGAAFATGLFLG). S-adenosyl-L-methionine contacts are provided by residues Asp-108, 110-111 (GT), Ser-116, Glu-134, Val-135, Ala-163, Asp-185, Asp-187, and Tyr-194.

This sequence belongs to the class I-like SAM-binding methyltransferase superfamily. Cation-dependent O-methyltransferase family. As to quaternary structure, homodimer.

It localises to the membrane. Its function is as follows. Putative O-methyltransferase. The sequence is that of Catechol O-methyltransferase domain-containing protein 1 (COMTD1) from Homo sapiens (Human).